The primary structure comprises 130 residues: Small ribosomal subunit protein uS8 (130 aa).

Belongs to the universal ribosomal protein uS8 family. In terms of assembly, part of the 30S ribosomal subunit.

One of the primary rRNA binding proteins, it binds directly to 16S rRNA central domain where it helps coordinate assembly of the platform of the 30S subunit. This chain is Small ribosomal subunit protein uS8, found in Methanococcus vannielii (strain ATCC 35089 / DSM 1224 / JCM 13029 / OCM 148 / SB).